We begin with the raw amino-acid sequence, 633 residues long: Phosphomethylpyrimidine synthase (633 aa).

Over residues 1 to 13 (MNIRSNPDTTLPA) the composition is skewed to polar residues. The interval 1 to 22 (MNIRSNPDTTLPAVTTGPLPSS) is disordered. Substrate is bound by residues N221, M250, Y279, H315, 335 to 337 (SRG), 376 to 379 (DGLR), and E415. H419 contacts Zn(2+). Y442 contributes to the substrate binding site. Residue H483 participates in Zn(2+) binding. Residues C563, C566, and C571 each coordinate [4Fe-4S] cluster.

It belongs to the ThiC family. In terms of assembly, homodimer. [4Fe-4S] cluster is required as a cofactor.

The enzyme catalyses 5-amino-1-(5-phospho-beta-D-ribosyl)imidazole + S-adenosyl-L-methionine = 4-amino-2-methyl-5-(phosphooxymethyl)pyrimidine + CO + 5'-deoxyadenosine + formate + L-methionine + 3 H(+). The protein operates within cofactor biosynthesis; thiamine diphosphate biosynthesis. In terms of biological role, catalyzes the synthesis of the hydroxymethylpyrimidine phosphate (HMP-P) moiety of thiamine from aminoimidazole ribotide (AIR) in a radical S-adenosyl-L-methionine (SAM)-dependent reaction. The chain is Phosphomethylpyrimidine synthase from Bradyrhizobium sp. (strain BTAi1 / ATCC BAA-1182).